Consider the following 313-residue polypeptide: Secretory carrier-associated membrane protein 4 (313 aa).

Positions 1–69 (MAGRSRYDNP…LPPEPADFYN (69 aa)) are disordered. Residues 1–148 (MAGRSRYDNP…EIPVHLQRTQ (148 aa)) are Cytoplasmic-facing. Positions 85–116 (MKTREKELLAKEAELNRREKEIKRREEAAARA) form a coiled coil. The next 4 membrane-spanning stretches (helical) occupy residues 149-169 (YVAF…IICV), 181-201 (IWFL…YLWY), 216-236 (FGWF…AAVS), and 255-275 (LIGN…MFCL). The Cytoplasmic portion of the chain corresponds to 276-313 (ESLLSMWVIQRVYLYFRGSGKEAEMKREAARSAARAAF).

This sequence belongs to the SCAMP family.

The protein resides in the cell membrane. The protein localises to the cytoplasmic vesicle. It is found in the secretory vesicle membrane. In terms of biological role, probably involved in membrane trafficking. This is Secretory carrier-associated membrane protein 4 (SCAMP4) from Oryza sativa subsp. japonica (Rice).